The following is a 145-amino-acid chain: Large ribosomal subunit protein uL16 (145 aa).

It belongs to the universal ribosomal protein uL16 family. In terms of assembly, part of the 50S ribosomal subunit.

Functionally, binds 23S rRNA and is also seen to make contacts with the A and possibly P site tRNAs. The protein is Large ribosomal subunit protein uL16 of Agathobacter rectalis (strain ATCC 33656 / DSM 3377 / JCM 17463 / KCTC 5835 / VPI 0990) (Eubacterium rectale).